The primary structure comprises 314 residues: Transcriptional activator RhrA (314 aa).

One can recognise an HTH araC/xylS-type domain in the interval 210–310; the sequence is ASIKMRVEQN…GVRPSDLRRL (101 aa). DNA-binding regions (H-T-H motif) lie at residues 228–249 and 277–300; these read TDVA…SREG and ISQI…RSRY.

Functionally, transcriptional activator of the rhizobactin regulon. This chain is Transcriptional activator RhrA (rhrA), found in Rhizobium meliloti (strain 1021) (Ensifer meliloti).